Consider the following 353-residue polypeptide: UPF0283 membrane protein YcjF (353 aa).

Over residues 1-19 the composition is skewed to basic and acidic residues; it reads MSEPLKPRIDFAEPLKEES. The disordered stretch occupies residues 1 to 29; the sequence is MSEPLKPRIDFAEPLKEESTSTFKAQQTF. Over residues 20-29 the composition is skewed to polar residues; sequence TSTFKAQQTF. 3 helical membrane-spanning segments follow: residues 70–90, 100–120, and 213–233; these read MVLGGLALFGASVVGQGIQWT, AALGGCAAGALIIGAGVGSVI, and ESTLMIAVSPLALVDMAFIAW.

This sequence belongs to the UPF0283 family.

Its subcellular location is the cell inner membrane. The chain is UPF0283 membrane protein YcjF from Salmonella arizonae (strain ATCC BAA-731 / CDC346-86 / RSK2980).